A 70-amino-acid polypeptide reads, in one-letter code: Melittin (70 aa).

A signal peptide spans Met-1–Ala-21. Residues Ala-22 to Ala-43 constitute a propeptide, removed by a dipeptidylpeptidase. An N-formylglycine; partial modification is found at Gly-44. At Gln-69 the chain carries Glutamine amide.

This sequence belongs to the melittin family. Monomer (in solution and for integration into membranes), homotetramer (in solution and potentially as a toroidal pore in membranes), and potenially homomultimer (as a toroidal pore in membranes). In terms of tissue distribution, expressed by the venom gland.

The protein localises to the secreted. It is found in the target cell membrane. Melittin: Main toxin of bee venom with strong antimicrobial activity and hemolytic activity. It has enhancing effects on bee venom phospholipase A2 activity. This amphipathic toxin binds to negatively charged membrane surface and forms pore by inserting into lipid bilayers inducing the leakage of ions and molecules and the enhancement of permeability that ultimately leads to cell lysis. It acts as a voltage-gated pore with higher selectivity for anions over cations. The ion conductance has been shown to be voltage-dependent. Self-association of melittin in membranes is promoted by high ionic strength, but not by the presence of negatively charged lipids. In vivo, intradermal injection into healthy human volunteers produce sharp pain sensation and an inflammatory response. It produces pain by activating primary nociceptor cells directly and indirectly due to its ability to activate plasma membrane phospholipase A2 and its pore-forming activity. In the context of inflammation and cancer tests, is highly cytotoxic to normal cells, highly induces calcium signaling and almost completely prevents cAMP production. In addition, prevents LPS-induced nitric oxid (NO) synthesis but does not affect the IP3 signaling and pro-inflammatory activation of endothelial cells. Also shows significant antiproliferative activity on the breast cancer cell line MDA-MB-231. Functionally, melittin-S: 1.4-fold less hemolytic and adopts a less organized secondary structure than melittin. In terms of biological role, melittin-2: Has strong hemolytic activity. In Apis mellifera (Honeybee), this protein is Melittin (MELT).